Here is a 409-residue protein sequence, read N- to C-terminus: Autophagy-related protein 37 (409 aa).

The Cytoplasmic segment spans residues 1 to 313 (MSESIDRVFV…LKLIKTVIKH (313 aa)). One can recognise an ACB domain in the interval 5 to 103 (IDRVFVKAIG…LIDTMKQFAS (99 aa)). The helical transmembrane segment at 314 to 334 (VAIDAVIIAVLVAVIKRSIII) threads the bilayer. Residues 335-409 (PNLISNEISL…VSRIRLIKRN (75 aa)) lie on the Peroxisomal side of the membrane.

It belongs to the ATG37 family. As to quaternary structure, interacts with ATG30 and PEX3. In terms of processing, phosphorylated.

The protein localises to the peroxisome membrane. Acyl-CoA binding protein which acts as the peroxisome receptor for pexophagy. Required for both micropexophagy and macropexophagy, but not for the cytoplasm to vacuole transport (Cvt) or autophagy pathways. Required for functional micropexophagic apparatus (MIPA) and relocation of ATG11 to the peroxisome-sequestering arms of the vacuole. Binds palmitoyl-CoA but not oleyl-CoA. The chain is Autophagy-related protein 37 from Komagataella phaffii (strain GS115 / ATCC 20864) (Yeast).